Consider the following 593-residue polypeptide: MRTHYCSAVNELSLDKQITVCGWVHNRRDHGGVIFLDIRDRSGLLQVVYEPENKEIFAIAEKLRSEFVVRVTGIVRKRPEGMINDKMETGRVEVIGTQLEILNQSPTPPFLPDDHQIINEDLRYKYRYIDLRRAVMQKKLTLRHKLNSCIRNYLNEQNFLDIETPMLTKATPEGARDYLVPSRVHPGQFYALPQSPQLFKQLLMMSGFDKYYQIVRCFRDEDLRADRQPEFTQLDIEMAFINEEDILQLIEGLLKIVFKEILNITLPDKLPRMSYKEAMTRYGSDKPDLRNPLELIDIADLVKDCDFNVFSSAANDNSGRVVALKLPNGCDLSRKDLDNYGQFVTIYGAKGLAYIKVNDLSAGMAGLQSPILKFLSETAVQSILNRVEAQTGDVIFFGADKAHVVNESMGALRNKLGHDRNLINSGWQLLWVVDWPMFELDPQSNKLQPMHHPFTSPQELSAEALRSKPTQTLAKAYDIVINGYEIGGGSIRIHQPELQKTVFDLIGIGDQEAHEKFGFLLDALQYGAPPHGGIALGIDRLAMLLTDSTSIRDVIAFPKTQTASCPLTSAPSPAGNAQLTELGIRLAPTITTK.

Position 173 (glutamate 173) interacts with L-aspartate. The tract at residues 197–200 is aspartate; sequence QLFK. Residue arginine 219 coordinates L-aspartate. ATP is bound by residues 219–221 and glutamine 228; that span reads RDE. Histidine 451 is a binding site for L-aspartate. An ATP-binding site is contributed by glutamate 485. L-aspartate is bound at residue arginine 492. Residue 537–540 participates in ATP binding; that stretch reads GIDR.

This sequence belongs to the class-II aminoacyl-tRNA synthetase family. Type 1 subfamily. Homodimer.

It is found in the cytoplasm. It catalyses the reaction tRNA(Asx) + L-aspartate + ATP = L-aspartyl-tRNA(Asx) + AMP + diphosphate. Functionally, aspartyl-tRNA synthetase with relaxed tRNA specificity since it is able to aspartylate not only its cognate tRNA(Asp) but also tRNA(Asn). Reaction proceeds in two steps: L-aspartate is first activated by ATP to form Asp-AMP and then transferred to the acceptor end of tRNA(Asp/Asn). The chain is Aspartate--tRNA(Asp/Asn) ligase from Legionella pneumophila (strain Corby).